Here is a 514-residue protein sequence, read N- to C-terminus: MLTRVKSAVANFMGGIMAGSSGSEHGGGSCGGSDLPLRFPYGRPEFLGLSQDEVECSADHIARPILILKETRRLPWATGYAEVINAGKSTHNEDQASCEVLTVKKKAGAVTSTPNRNSSKRRSSLPNGEGLQLKENSESEGVSCHYWSLFDGHAGSGAAVVASRLLQHHITEQLQDIVDILKNSAVLPPTCLGEEPENTPANSRTLTRAASLRGGVGAPGSPSTPPTRFFTEKKIPHECLVIGALESAFKEMDLQIERERSSYNISGGCTALIVICLLGKLYVANAGDSRAIIIRNGEIIPMSSEFTPETERQRLQYLAFMQPHLLGNEFTHLEFPRRVQRKELGKKMLYRDFNMTGWAYKTIEDEDLKFPLIYGEGKKARVMATIGVTRGLGDHDLKVHDSNIYIKPFLSSAPEVRIYDLSKYDHGSDDVLILATDGLWDVLSNEEVAEAITQFLPNCDPDDPHRYTLAAQDLVMRARGVLKDRGWRISNDRLGSGDDISVYVIPLIHGNKLS.

Ser7 carries the post-translational modification Phosphoserine. A PPM-type phosphatase domain is found at 77 to 507 (ATGYAEVINA…DDISVYVIPL (431 aa)). The interval 109–135 (AVTSTPNRNSSKRRSSLPNGEGLQLKE) is disordered. Phosphothreonine is present on Thr113. Phosphoserine occurs at positions 124 and 211. Arg213 bears the Omega-N-methylarginine mark. Ser221 is subject to Phosphoserine. Thr224 bears the Phosphothreonine mark. Phosphoserine is present on Ser422.

Belongs to the PP2C family.

The protein resides in the nucleus. It localises to the cytoplasm. The enzyme catalyses O-phospho-L-seryl-[protein] + H2O = L-seryl-[protein] + phosphate. The catalysed reaction is O-phospho-L-threonyl-[protein] + H2O = L-threonyl-[protein] + phosphate. Dephosphorylates CDKN1B at 'Thr-187', thus removing a signal for proteasomal degradation. This chain is Protein phosphatase 1H (PPM1H), found in Homo sapiens (Human).